We begin with the raw amino-acid sequence, 116 residues long: Large ribosomal subunit protein bL20c (116 aa).

This sequence belongs to the bacterial ribosomal protein bL20 family.

It is found in the plastid. The protein localises to the chloroplast. Its function is as follows. Binds directly to 23S ribosomal RNA and is necessary for the in vitro assembly process of the 50S ribosomal subunit. It is not involved in the protein synthesizing functions of that subunit. The polypeptide is Large ribosomal subunit protein bL20c (Ipomoea purpurea (Common morning glory)).